A 506-amino-acid polypeptide reads, in one-letter code: Nostrin (506 aa).

The F-BAR domain maps to 1 to 260 (MRDPLTDCPY…AISKIDIEKD (260 aa)). Ser114 is modified (phosphoserine). Residues 160-222 (SMTEKEKRKL…LELEKERIQL (63 aa)) adopt a coiled-coil conformation. Residues 292-372 (AMDKERRKSL…SYKLSSMLAE (81 aa)) enclose the REM-1 domain. The region spanning 438–497 (LSSRLCKALYSFQARQDDELNLEKGDIVIIHEKKEGGWWFGSLNGKKGHFPAAYVEELPS) is the SH3 domain. The residue at position 479 (Ser479) is a Phosphoserine.

In terms of assembly, homotrimer. Interacts with DAB2. Interacts with NOS3, DNM2, WASL and CAV1. Interacts (via SH3 domain) with DNM2; this interaction allows the recruitment of NOS3 to dynamin-positive structures. Expressed at highest levels in heart, kidney, placenta and lung, and at lowest levels in brain, thymus and spleen. Present in vascular endothelial cells and placenta. Over-expressed in placenta from women with pre-eclampsia (at protein level).

The protein localises to the cell membrane. It localises to the cytoplasmic vesicle. It is found in the cytoplasm. The protein resides in the cytoskeleton. Its subcellular location is the nucleus. Multivalent adapter protein which may decrease NOS3 activity by inducing its translocation away from the plasma membrane. The polypeptide is Nostrin (Homo sapiens (Human)).